Reading from the N-terminus, the 173-residue chain is Crossover junction endodeoxyribonuclease RuvC (173 aa).

Active-site residues include aspartate 8, glutamate 67, and aspartate 139. 3 residues coordinate Mg(2+): aspartate 8, glutamate 67, and aspartate 139.

This sequence belongs to the RuvC family. Homodimer which binds Holliday junction (HJ) DNA. The HJ becomes 2-fold symmetrical on binding to RuvC with unstacked arms; it has a different conformation from HJ DNA in complex with RuvA. In the full resolvosome a probable DNA-RuvA(4)-RuvB(12)-RuvC(2) complex forms which resolves the HJ. The cofactor is Mg(2+).

Its subcellular location is the cytoplasm. It carries out the reaction Endonucleolytic cleavage at a junction such as a reciprocal single-stranded crossover between two homologous DNA duplexes (Holliday junction).. Functionally, the RuvA-RuvB-RuvC complex processes Holliday junction (HJ) DNA during genetic recombination and DNA repair. Endonuclease that resolves HJ intermediates. Cleaves cruciform DNA by making single-stranded nicks across the HJ at symmetrical positions within the homologous arms, yielding a 5'-phosphate and a 3'-hydroxyl group; requires a central core of homology in the junction. The consensus cleavage sequence is 5'-(A/T)TT(C/G)-3'. Cleavage occurs on the 3'-side of the TT dinucleotide at the point of strand exchange. HJ branch migration catalyzed by RuvA-RuvB allows RuvC to scan DNA until it finds its consensus sequence, where it cleaves and resolves the cruciform DNA. The polypeptide is Crossover junction endodeoxyribonuclease RuvC (Shewanella sediminis (strain HAW-EB3)).